A 230-amino-acid chain; its full sequence is Orotidine 5'-phosphate decarboxylase (230 aa).

Substrate is bound by residues Asp-10, Lys-32, 59–68 (DLKYHDIPNT), Thr-119, Arg-180, Gln-189, Gly-209, and Arg-210. Lys-61 serves as the catalytic Proton donor.

This sequence belongs to the OMP decarboxylase family. Type 1 subfamily. Homodimer.

The catalysed reaction is orotidine 5'-phosphate + H(+) = UMP + CO2. It functions in the pathway pyrimidine metabolism; UMP biosynthesis via de novo pathway; UMP from orotate: step 2/2. Catalyzes the decarboxylation of orotidine 5'-monophosphate (OMP) to uridine 5'-monophosphate (UMP). The protein is Orotidine 5'-phosphate decarboxylase of Haemophilus ducreyi (strain 35000HP / ATCC 700724).